Here is an 89-residue protein sequence, read N- to C-terminus: Small ribosomal subunit protein uS15 (89 aa).

This sequence belongs to the universal ribosomal protein uS15 family. In terms of assembly, part of the 30S ribosomal subunit. Forms a bridge to the 50S subunit in the 70S ribosome, contacting the 23S rRNA.

Functionally, one of the primary rRNA binding proteins, it binds directly to 16S rRNA where it helps nucleate assembly of the platform of the 30S subunit by binding and bridging several RNA helices of the 16S rRNA. In terms of biological role, forms an intersubunit bridge (bridge B4) with the 23S rRNA of the 50S subunit in the ribosome. The sequence is that of Small ribosomal subunit protein uS15 from Chlorobaculum tepidum (strain ATCC 49652 / DSM 12025 / NBRC 103806 / TLS) (Chlorobium tepidum).